The chain runs to 205 residues: Urease accessory protein UreG (205 aa).

14–21 (GPVGSGKT) serves as a coordination point for GTP.

It belongs to the SIMIBI class G3E GTPase family. UreG subfamily. In terms of assembly, homodimer. UreD, UreF and UreG form a complex that acts as a GTP-hydrolysis-dependent molecular chaperone, activating the urease apoprotein by helping to assemble the nickel containing metallocenter of UreC. The UreE protein probably delivers the nickel.

It is found in the cytoplasm. In terms of biological role, facilitates the functional incorporation of the urease nickel metallocenter. This process requires GTP hydrolysis, probably effectuated by UreG. The sequence is that of Urease accessory protein UreG from Escherichia coli.